A 577-amino-acid polypeptide reads, in one-letter code: Anthranilate synthase alpha subunit 1, chloroplastic (577 aa).

The N-terminal 34 residues, 1–34 (MASLVLSLRIAPSTPPLGLGGGRFRGRRGAVACR), are a transit peptide targeting the chloroplast.

Belongs to the anthranilate synthase component I family. As to quaternary structure, heterotetramer consisting of two non-identical subunits: a beta subunit and a large alpha subunit.

The protein resides in the plastid. It is found in the chloroplast. The enzyme catalyses chorismate + L-glutamine = anthranilate + pyruvate + L-glutamate + H(+). Its pathway is amino-acid biosynthesis; L-tryptophan biosynthesis; L-tryptophan from chorismate: step 1/5. With respect to regulation, feedback inhibition by tryptophan. Its function is as follows. Part of a heterotetrameric complex that catalyzes the two-step biosynthesis of anthranilate, an intermediate in the biosynthesis of L-tryptophan. In the first step, the glutamine-binding beta subunit of anthranilate synthase (AS) provides the glutamine amidotransferase activity which generates ammonia as a substrate that, along with chorismate, is used in the second step, catalyzed by the large alpha subunit of AS to produce anthranilate. The sequence is that of Anthranilate synthase alpha subunit 1, chloroplastic from Oryza sativa subsp. japonica (Rice).